The primary structure comprises 555 residues: Transmembrane protein 87A (555 aa).

An N-terminal signal peptide occupies residues 1 to 21 (MAVAAWLQVSPVIFLLLGAQP). Over 22–225 (FPLSFLGAGP…YEYLTLEDYP (204 aa)) the chain is Lumenal. Cystine bridges form between C74-C128 and C89-C431. N-linked (GlcNAc...) asparagine glycans are attached at residues N79, N157, and N160. The chain crosses the membrane as a helical span at residues 226–246 (LMIFFMVMCIVYVLFGVLWLA). Residues 247-257 (WSACYWRDLLR) are Cytoplasmic-facing. Residues 258 to 278 (IQFWIGAVIFLGMFEKAVFYA) traverse the membrane as a helical segment. Residues 279–305 (EFQNIRYKGESVQNALVLAELLSAVKR) are Lumenal-facing. A helical transmembrane segment spans residues 306 to 322 (SLARTLVIIVSLGYGIV). Over 323 to 325 (KPR) the chain is Cytoplasmic. The chain crosses the membrane as a helical span at residues 326 to 346 (LGVTLHKVVVAGALYLLFSGM). Topologically, residues 347-361 (EGVLRVTGAQTDLAS) are lumenal. Residues 362–382 (LAFIPLAFLDTALCWWIFISL) traverse the membrane as a helical segment. Over 383 to 403 (TQTMKLLKLRRNIVKLSLYRH) the chain is Cytoplasmic. Residues 404 to 424 (FTNTLILAVAASIVFIIWTTM) form a helical membrane-spanning segment. Topologically, residues 425–437 (KFRIVTCQSDWRE) are lumenal. A helical membrane pass occupies residues 438 to 458 (LWVDDAIWRLLFSMILFVIMI). Over 459–555 (LWRPSANNQR…ITHFERSKME (97 aa)) the chain is Cytoplasmic. The tract at residues 491 to 515 (SFEGMKMRSTKQEPNGTSKVNKAQE) is disordered. The segment covering 502–511 (QEPNGTSKVN) has biased composition (polar residues). S540 carries the phosphoserine modification.

This sequence belongs to the LU7TM family. TMEM87 subfamily. May interact with STOML3; STOML3 potentiates the mechanosensitive ion channel activity associated with TMEM87A. Highly expressed in sensory neurons responsive to mechanical force.

Its subcellular location is the cell membrane. The protein localises to the golgi apparatus membrane. The protein resides in the cell projection. It localises to the ruffle. Potential monoatomic ion channel gated by mechanical force, implicated in normal touch sensitivity through the generation of mechanically activated currents. However, a direct channel activity is debated and an alternative could be that it functions as a chaperone for an unidentified mechanosensitive ion channel. Could also be involved in cell mechanosensitivity regulating cell adhesion and migration. May also be involved in retrograde transport from endosomes to the trans-Golgi network (TGN). This chain is Transmembrane protein 87A, found in Mus musculus (Mouse).